Consider the following 360-residue polypeptide: F420-dependent hydroxymycolic acid dehydrogenase (360 aa).

Positions 1 to 40 form a signal peptide, tat-type signal; the sequence is MTGISRRTFGLAAGFGAIGAGGLGGGCSTRSGPTPTPEPA. Coenzyme F420-(gamma-Glu)n is bound at residue Asp-77. The active-site Proton donor is His-78. 145-146 lines the coenzyme F420-(gamma-Glu)n pocket; it reads TG. Residue Glu-147 is the Proton acceptor of the active site. Coenzyme F420-(gamma-Glu)n-binding positions include Asn-150 and 213–214; that span reads SG.

It belongs to the F420-dependent hydroxymycolic acid dehydrogenase family. Homodimer. Post-translationally, is exported by the Tat system. The position of the signal peptide cleavage has not been experimentally proven. May be lipidated.

It is found in the cell envelope. The protein operates within lipid metabolism; mycolic acid biosynthesis. With respect to regulation, is inhibited by the anti-tuberculous drug PA-824, a bicyclic 4-nitroimidazole class compound. Therefore, this is consistent with the finding that PA-824 inhibits the formation of K-MAs and causes an accumulation of hydroxymycolic acids (H-MAs) in M.tuberculosis. Its function is as follows. Catalyzes the coenzyme F420-dependent oxidation of hydroxymycolic acids (H-MAs) to ketomycolic acids (K-MAs), a lipid class making up the mycobacterial pseudo-outer membrane and over one-third of the dry weight of M.tuberculosis. Does not exhibit F420-dependent glucose-6-phosphate dehydrogenase (FGD) activity. This is F420-dependent hydroxymycolic acid dehydrogenase from Mycobacterium tuberculosis (strain ATCC 25618 / H37Rv).